Reading from the N-terminus, the 229-residue chain is Cytidylate kinase (229 aa).

10-18 (GFSSCGKST) serves as a coordination point for ATP.

The protein belongs to the cytidylate kinase family. Type 1 subfamily.

Its subcellular location is the cytoplasm. The catalysed reaction is CMP + ATP = CDP + ADP. The enzyme catalyses dCMP + ATP = dCDP + ADP. The polypeptide is Cytidylate kinase (Bacteroides thetaiotaomicron (strain ATCC 29148 / DSM 2079 / JCM 5827 / CCUG 10774 / NCTC 10582 / VPI-5482 / E50)).